We begin with the raw amino-acid sequence, 361 residues long: Chorismate synthase (361 aa).

The NADP(+) site is built by R48 and R54. Residues R125–S127, N238–A239, G278, K293–S297, and R319 each bind FMN.

Belongs to the chorismate synthase family. As to quaternary structure, homotetramer. FMNH2 is required as a cofactor.

It catalyses the reaction 5-O-(1-carboxyvinyl)-3-phosphoshikimate = chorismate + phosphate. It functions in the pathway metabolic intermediate biosynthesis; chorismate biosynthesis; chorismate from D-erythrose 4-phosphate and phosphoenolpyruvate: step 7/7. Catalyzes the anti-1,4-elimination of the C-3 phosphate and the C-6 proR hydrogen from 5-enolpyruvylshikimate-3-phosphate (EPSP) to yield chorismate, which is the branch point compound that serves as the starting substrate for the three terminal pathways of aromatic amino acid biosynthesis. This reaction introduces a second double bond into the aromatic ring system. This is Chorismate synthase from Vibrio campbellii (strain ATCC BAA-1116).